The following is a 709-amino-acid chain: MSKTFAEIAEAFLEPEAVRIAKEAVEEYGDHERKIIQIGIHFQVCCMFCDEYLSTNGSDRFVLIEGRKRGTAVSLQNELCKSYDLEPLPFLCDIFDREEKQFVEIGITRKADDSYFQSKFGKLGNSCKIFVFSYDGRLDKNCEGPMEEQKLRIFSFLATAADFLRKENMFNEIFLPDNEETIIEMKKGKTFLELRDESVPLPFQTYEQMKDYCEKFKGNPRELASKVSQMQSNIKLPIKHYEQNKFRQIRLPKGPMAPYTHKFLMEEAWMFTKISDPERSRAGEILIDFFKKGNLSAIRPKDKPLQGKYPIHYKNLWNQIKAAIADRTMVINENDHSEFLGGIGRASKKIPEISLTQDVITTEGLKQSENKLPEPRSFPRWFNAEWMWAIKDSDLTGWVPMAEYPPADNELEDYAEHLNKTMEGVLQGTNCAREMGKCILTVGALMTECRLFPGKIKVVPIYARSKERKSMQEGLPVPSEMDCLFGICVKSKSHLNKDDGMYTIITFEFSIREPNLEKHQKYTVFEAGHTTVRMKKGESVIGREVPLYLYCRTTALSKIKNDWLSKARRCFITTMDTVETICLRESAKAEENLVEKTLNEKQMWIGKKNGELIAQPLREALRVQLVQQFYFCIYNDSQLEGFCNEQKKILMALEGDKKNKSSFGFNPEGLLEKIEECLINNPMCLFMAQRLNELVIEASKRGAKFFKTD.

Residues His-41, Glu-65, Asp-93, Glu-104, and Ile-105 each contribute to the Mn(2+) site. Positions 109 to 124 match the Nuclear localization signal 1 (NLS1) motif; sequence RKADDSYFQSKFGKLG. A Nuclear localization signal 2 (NLS2) motif is present at residues 166–228; it reads KENMFNEIFL…NPRELASKVS (63 aa).

This sequence belongs to the influenza viruses PA family. Influenza RNA polymerase is composed of three subunits: PB1, PB2 and PA. Interacts (via C-terminus) with PB1 (via N-terminus). The cofactor is Mn(2+). Post-translationally, phosphorylated on serines and threonines by host kinases, including human casein kinase II.

It localises to the host cytoplasm. It is found in the host nucleus. Plays an essential role in viral RNA transcription and replication by forming the heterotrimeric polymerase complex together with PB1 and PB2 subunits. The complex transcribes viral mRNAs by using a unique mechanism called cap-snatching. It consists in the hijacking and cleavage of host capped pre-mRNAs. These short capped RNAs are then used as primers for viral mRNAs. The PB2 subunit is responsible for the binding of the 5' cap of cellular pre-mRNAs which are subsequently cleaved after 10-13 nucleotides by the PA subunit that carries the endonuclease activity. The chain is Polymerase acidic protein from Homo sapiens (Human).